The chain runs to 440 residues: GTPase Der (440 aa).

2 EngA-type G domains span residues 3–168 and 177–353; these read PIIA…GKMD and LKLA…EEYT. GTP-binding positions include 9 to 16, 56 to 60, 119 to 122, 183 to 190, 230 to 234, and 295 to 298; these read GRPNVGKS, DTGGL, NKID, GKPNAGKS, DTAGI, and NKWD. The KH-like domain maps to 354–438; that stretch reads KRISTGLLNT…PIMISFENKS (85 aa).

Belongs to the TRAFAC class TrmE-Era-EngA-EngB-Septin-like GTPase superfamily. EngA (Der) GTPase family. As to quaternary structure, associates with the 50S ribosomal subunit.

In terms of biological role, GTPase that plays an essential role in the late steps of ribosome biogenesis. The chain is GTPase Der from Fusobacterium nucleatum subsp. nucleatum (strain ATCC 25586 / DSM 15643 / BCRC 10681 / CIP 101130 / JCM 8532 / KCTC 2640 / LMG 13131 / VPI 4355).